A 2496-amino-acid chain; its full sequence is MVDLSQTSPGRPVCLVFGPQIAEIDESLFYISRNIDENPALHFLKDVLRELPSLWSTISDTWAPLSSIPGAAQLTALADCVQGGPIATHENPTNVLLTPLTVIRQIIDAWKFKEKSQNKCRIMDAQGFCVGFLAAVAVACSNDAKEFADIASTMVRLAVCIGTAVDLDGISHGQARSVAVRWKSASENEQLNRLLTSSSTAYVSCFTDTNSATVTVAEDAVDDLIKELGSHGLSVKIIDLKGRFHHASHITAVQYLSSLCDTDDRLRLAGTGTCVLPLRSNVDGHLIGKISDIHKIALESILTKPSQWAMTVSAAVEHSRETNDDLSLAAIGTGQFVPRLVRNRVLDHTNNSLWDTKHEMLPNGIHKSSFPTESMQSTNMAAMAGTATPIAITGMGCRYAQADSPEQLWEMLELGQCGVSALPNERFKMDKLRREPKGPFWGNYLANPDVFDHRFFGISAREADAMDPQQRLLLQVGYEAMESAGYCGLRNPNVPTDIGCYVGVGSDDYTENVGSTHANAFSATGTLQAFCTGRLSHYFGWTGPSVVVDTACSSAAVSIHLACKALQTNECSIAVAGGVNVMTSPRVTQNLAAASFLSPTGASKAFDATANGYCRGEGAGLVVLRPLADAIRNGDPILAVIGGSAVNQGSNCSPITVPDSNSQRSLYRKALLASGIPPEDVTYVEAHGTGTQVGDPIEFDSIRKAFGGPGRSEKLHVGSIKDNIGHTETASGVAGLLKTVLMMQKQQIPKQANFVQLNPKIPALDDAEIAIPTKSIHWPSAATSSSNAVAMVTNYGAAGSNAALVVKQYKAPSEPSNRASLLPSEVPIILAANSVESLRSYCKVLLPSVRNAQLGSCQDIAYNLAVKQSRDMDYISTLTVPADQPNELIAKLESMSTETTNPKKQPSSRLPVILCFGGQNGNETTLSEDLFNQCELLQYHLMECEKVCRTRDLPSLFPRIFQTGPIEDTVSLHCILFSIQYASAMSWISSGLQVDRIIGHSFGQLTGLCVAGGLNLSDALYLVSERARMIQSMWGSERGAMLLVEGTEADVQSLLNRATQQMADAAVDVACVNGPRNIILAGDERSLQMIQKLSAETPSILRTKRLKNTHAFHSRLVDSIVPSLSKVAQQLQYTPLSIPLEACWQDGDWSFVSPDKIVAHSRGRVDFQTAVERVAQRIQGPAIWLEAGSASPIIPLVRRVIDTVTASSKDHLYQSLDLGGPQGQKNLSQATCNLWSRGAKVQFWQFHGSQAKSYNWINLPPYQFAQTRHWIAYDPNAFAPLPEDKPTVPSSGGPKEFVQLLTKQPTECVFAINTKDHLYQECTQGHAVLDQNLCPASLYFEVIVRAAGLVRPENDTSPSMPHLQNLAISAPLVLNPTGNVLLSLTRARAGDSPWSFSLYTREPNTNLVTTHATGEISLHPFGQNTPLFVRLHSMNRLIDSSRVDSIANSRESSGLKGFAVYQAFRRVVNYADCYRGVERVFATEHEAAGIVNLLSSKTKDAACDPMLVDNFIQVAGIHVNCLSETNEDEVFVCTGVGEILIGEAFMTRDPKSSRSWGVYSNMDRSVKNKIACDTFVLDRETGKLAVTILSAEFTSVSIAGLARVLKKLNNQADDEKASPDLSLRNDSKVDVNPTPQNTAPVVQPTRQAAAEPGYFVVVQEMLCDLLGIVSEELLPSSNLEEIGVDSLMRTEVLVEIKKRFNVSIDASTLTEIPNIQALVQTIFPDAATAPLTHGVHPSLEIETTDVPDSENNTHVIPTPISDADVHGLIDIAPTLFTDIQRSTSHSEMTQWNGFCESVYPKQMALVTAYVVEAFKSLGVSLDKFEAEGVIPQVPVLKQHGKVRNQLYSILEFSNLIRATDRGFVRTTIPVPTISSDVLHEEIIRLYPQHRSEHHLLKTTGSRLSDCLSGAADPLSLLFQDAEARRLMEDVYTNAPMFKGATNHLAQYLVNLLGRMDTTREINILEIGGGTGGTTKALLNQLTAVPGLRFQYTFTDLSSGLLTLARKKFKHYNFMKYQVLNVEQTPTPDMVGQYDIILSSNCVHATRNLVQSCSNINKLLRPDGILCLIELTRNLFWFDLVFGLLEGWWLFEDGRQHALATEHMWKQTLVQSGFQWVDWTHNDSEESNVLRVITASPTSAVILPPTPGSPLRVMNEETVPYGKNGAVELSADIYYPRDLQPIGKPRPIALLIHGGGHIMLSRRDVRSKQVKMLLDAGFLPVSVDYRLCPEVSLSEGPMHDVCDALSWARNVLPKLSLCRPDIQSDGTQVVAVGWSTGAHLAMTLAWTAEQRGIEPPQAILAFYGPTDYEDPFWSKPNFPYGKSAASPEMSYNLWEGMHETPITAYNPPANQNALGGWMSPADPRSRIALHMNWKGQSLPMLLHGGHFWSAHKDGDCGEDLPVPTLKEIQAVSPLAQIRNGCYKTPTFIIHGTLDDLIPVEQAQRTSQELVTKGVEVELRIVDKAVHLFDIYPGFEKDHAAAQAVQDGYEFLRDHVRY.

The interval 15 to 254 (LVFGPQIAEI…HHASHITAVQ (240 aa)) is N-terminal acylcarrier protein transacylase domain (SAT). One can recognise a Ketosynthase family 3 (KS3) domain in the interval 387 to 808 (ATPIAITGMG…GSNAALVVKQ (422 aa)). Residues Cys552, His687, and His726 each act as for beta-ketoacyl synthase activity in the active site. Residues 914-1223 (LCFGGQNGNE…QSLDLGGPQG (310 aa)) form a malonyl-CoA:ACP transacylase (MAT) domain region. The active-site For acyl/malonyl transferase activity is Ser1001. Residues 1295–1423 (KEFVQLLTKQ…GEISLHPFGQ (129 aa)) are N-terminal hotdog fold. The PKS/mFAS DH domain maps to 1295–1602 (KEFVQLLTKQ…FTSVSIAGLA (308 aa)). The product template (PT) domain stretch occupies residues 1296 to 1601 (EFVQLLTKQP…EFTSVSIAGL (306 aa)). Residue His1326 is the Proton acceptor; for dehydratase activity of the active site. The interval 1451–1602 (ESSGLKGFAV…FTSVSIAGLA (152 aa)) is C-terminal hotdog fold. Asp1509 acts as the Proton donor; for dehydratase activity in catalysis. The span at 1615–1629 (EKASPDLSLRNDSKV) shows a compositional bias: basic and acidic residues. The disordered stretch occupies residues 1615 to 1645 (EKASPDLSLRNDSKVDVNPTPQNTAPVVQPT). Positions 1633-1645 (PTPQNTAPVVQPT) are enriched in polar residues. The Carrier domain occupies 1652 to 1726 (PGYFVVVQEM…ALVQTIFPDA (75 aa)). At Ser1686 the chain carries O-(pantetheine 4'-phosphoryl)serine. Residues 1888–2121 (QHRSEHHLLK…GFQWVDWTHN (234 aa)) are methyltransferase (CMeT) domain. The segment at 2151-2496 (RVMNEETVPY…YEFLRDHVRY (346 aa)) is thioesterase (TE) domain. Catalysis depends on for thioesterase activity residues Ser2274 and Asp2433.

The catalysed reaction is 3 malonyl-CoA + acetyl-CoA + 2 S-adenosyl-L-methionine = 3,5-dimethylorsellinate + 2 S-adenosyl-L-homocysteine + 3 CO2 + 4 CoA. The protein operates within secondary metabolite biosynthesis; terpenoid biosynthesis. Its function is as follows. Non-reducing polyketide synthase; part of the gene cluster that mediates the biosynthesis of andrastins, meroterpenoid compounds that exhibit inhibitory activity against ras farnesyltransferase, suggesting that they could be promising leads for antitumor agents. The first step of the pathway is the synthesis of 3,5-dimethylorsellinic acid (DMOA) by the polyketide synthase adrD via condensation of one acetyl-CoA starter unit with 3 malonyl-CoA units and 2 methylations. DMAO is then converted to farnesyl-DMAO by the prenyltransferase adrG. The methyltransferase adrK catalyzes the methylation of the carboxyl group of farnesyl-DMAO to farnesyl-DMAO methyl ester which is further converted to epoxyfarnesyl-DMAO methyl ester by the FAD-dependent monooxygenase adrH. The terpene cyclase adrI then catalyzes the carbon skeletal rearrangement to generate the andrastin E, the first compound in the pathway having the andrastin scaffold, with the tetracyclic ring system. The post-cyclization tailoring enzymes adrF, adrE, adrJ, and adrA, are involved in the conversion of andrastin E into andrastin A. The short chain dehydrogenase adrF is responsible for the oxidation of the C-3 a hydroxyl group of andrastin E to yield the corresponding ketone, andrastin D. The ketoreductase adrE stereoselectively reduces the carbonyl moiety to reverse the stereochemistry of the C-3 position to yield andrastin F. The acetyltransferase adrJ is the acetyltransferase that attaches the acetyl group to the C-3 hydroxyl group of andrastin F to yield andrastin C. Finally, the cytochrome P450 monooxygenase adrA catalyzes two sequential oxidation reactions of the C-23 methyl group, to generate the corresponding alcohol andrastin B, and aldehyde andrastin A. The chain is Non-reducing polyketide synthase adrD from Penicillium rubens (strain ATCC 28089 / DSM 1075 / NRRL 1951 / Wisconsin 54-1255) (Penicillium chrysogenum).